The primary structure comprises 77 residues: Large ribosomal subunit protein eL20 (77 aa).

It belongs to the eukaryotic ribosomal protein eL20 family. As to quaternary structure, part of the 50S ribosomal subunit. Binds 23S rRNA.

This chain is Large ribosomal subunit protein eL20, found in Pyrococcus furiosus (strain ATCC 43587 / DSM 3638 / JCM 8422 / Vc1).